The chain runs to 223 residues: Protein FAM3D (223 aa).

The signal sequence occupies residues 1–25; that stretch reads MRVAGLIRVVVFIFTIVTMWVFLRS. 2 cysteine pairs are disulfide-bonded: Cys-54-Cys-82 and Cys-60-Cys-217. Residues 62–221 form the GG-type lectin domain; sequence NNFFAFKISS…LELEGCVPRK (160 aa). Asn-106 is a glycosylation site (N-linked (GlcNAc...) asparagine).

It belongs to the FAM3 family.

It is found in the secreted. The protein is Protein FAM3D of Mus musculus (Mouse).